A 423-amino-acid chain; its full sequence is Phytoene synthase, chloroplastic (423 aa).

Residues 1–136 (MVVAILRVVS…DAYDRCGEVC (136 aa)) constitute a chloroplast transit peptide.

The protein belongs to the phytoene/squalene synthase family. Monomer.

The protein localises to the plastid. Its subcellular location is the chloroplast. It carries out the reaction 2 (2E,6E,10E)-geranylgeranyl diphosphate = 15-cis-phytoene + 2 diphosphate. Its pathway is carotenoid biosynthesis; phytoene biosynthesis; all-trans-phytoene from geranylgeranyl diphosphate: step 1/1. Functionally, catalyzes the reaction from prephytoene diphosphate to phytoene. The protein is Phytoene synthase, chloroplastic (PSY) of Narcissus pseudonarcissus (Daffodil).